We begin with the raw amino-acid sequence, 279 residues long: Pantothenate synthetase (279 aa).

Position 31-38 (31-38 (MGNLHGGH)) interacts with ATP. His38 functions as the Proton donor in the catalytic mechanism. Gln62 serves as a coordination point for (R)-pantoate. Residue Gln62 coordinates beta-alanine. Position 150–153 (150–153 (GRKD)) interacts with ATP. Gln156 contributes to the (R)-pantoate binding site. ATP is bound by residues Val179 and 187–190 (KSSR).

The protein belongs to the pantothenate synthetase family. Homodimer.

It is found in the cytoplasm. The enzyme catalyses (R)-pantoate + beta-alanine + ATP = (R)-pantothenate + AMP + diphosphate + H(+). It participates in cofactor biosynthesis; (R)-pantothenate biosynthesis; (R)-pantothenate from (R)-pantoate and beta-alanine: step 1/1. Catalyzes the condensation of pantoate with beta-alanine in an ATP-dependent reaction via a pantoyl-adenylate intermediate. The protein is Pantothenate synthetase of Stenotrophomonas maltophilia (strain K279a).